The following is a 356-amino-acid chain: Protein translocase subunit SecY (356 aa).

8 helical membrane-spanning segments follow: residues 24-44 (LFVIGALIVFRIGSFIPIPGI), 77-97 (IFALGIMPYISASIIIQLLTV), 125-145 (LVLAIFQSIGIATGLPNMPGM), 154-174 (FAFYFTAVVSLVTGTMFLMWL), 183-203 (IGNGISIIIFAGIVAGLPPAV), 217-237 (FLLLLLVAVLVFAVTFFVVFI), 274-294 (VIPAIFASSIILFPATIASWF), and 317-337 (YVLLYASAIIFFCFFYTALVF).

This sequence belongs to the SecY/SEC61-alpha family. As to quaternary structure, component of the Sec protein translocase complex. Heterotrimer consisting of SecY, SecE and SecG subunits. The heterotrimers can form oligomers, although 1 heterotrimer is thought to be able to translocate proteins. Interacts with the ribosome. Interacts with SecDF, and other proteins may be involved. Interacts with SecA.

It localises to the cell membrane. The central subunit of the protein translocation channel SecYEG. Consists of two halves formed by TMs 1-5 and 6-10. These two domains form a lateral gate at the front which open onto the bilayer between TMs 2 and 7, and are clamped together by SecE at the back. The channel is closed by both a pore ring composed of hydrophobic SecY resides and a short helix (helix 2A) on the extracellular side of the membrane which forms a plug. The plug probably moves laterally to allow the channel to open. The ring and the pore may move independently. The sequence is that of Protein translocase subunit SecY from Buchnera aphidicola subsp. Acyrthosiphon kondoi (Acyrthosiphon kondoi symbiotic bacterium).